The sequence spans 424 residues: Type II methyltransferase M.XorII (424 aa).

The SAM-dependent MTase C5-type domain maps to 4 to 367 (PIGIDLFAGA…GQIMKALRKK (364 aa)). The active site involves Cys83. The disordered stretch occupies residues 404–424 (RSRPVDRPAPRRHEERELVTA). Basic and acidic residues predominate over residues 406–424 (RPVDRPAPRRHEERELVTA).

It belongs to the class I-like SAM-binding methyltransferase superfamily. C5-methyltransferase family.

It catalyses the reaction a 2'-deoxycytidine in DNA + S-adenosyl-L-methionine = a 5-methyl-2'-deoxycytidine in DNA + S-adenosyl-L-homocysteine + H(+). Its function is as follows. A methylase that recognizes the double-stranded sequence 5'-CGATCG-3', methylates C-? on both strands and protects the DNA from cleavage by the XorII endonuclease. In Xanthomonas oryzae pv. oryzae (strain KACC10331 / KXO85), this protein is Type II methyltransferase M.XorII (xorIIM).